Here is a 77-residue protein sequence, read N- to C-terminus: MNTSDPPAVLRIAAITLLCTASESVEQNPLIPFENAVLGSYAKMASEKRCDGWMAKCPDRDDCCETFHCTRFNARGN.

Positions 1–21 (MNTSDPPAVLRIAAITLLCTA) are cleaved as a signal peptide. Residues 22–49 (SESVEQNPLIPFENAVLGSYAKMASEKR) constitute a propeptide that is removed on maturation. 2 disulfide bridges follow: Cys-50–Cys-64 and Cys-57–Cys-69.

The protein belongs to the neurotoxin 10 (Hwtx-1) family. 65 (Jztx-21) subfamily. Expressed by the venom gland.

The protein localises to the secreted. Functionally, probable ion channel inhibitor. This chain is U14-theraphotoxin-Cg1c, found in Chilobrachys guangxiensis (Chinese earth tiger tarantula).